The primary structure comprises 472 residues: Adenosylhomocysteinase (472 aa).

Substrate is bound by residues Thr-61, Asp-139, and Glu-198. An NAD(+)-binding site is contributed by 199 to 201 (TTT). Lys-228 and Asp-232 together coordinate substrate. Residues Asn-233, 262–267 (GFGDVG), Glu-285, Asn-320, 341–343 (IGH), and Asn-386 each bind NAD(+).

Belongs to the adenosylhomocysteinase family. NAD(+) serves as cofactor.

It is found in the cytoplasm. It catalyses the reaction S-adenosyl-L-homocysteine + H2O = L-homocysteine + adenosine. It functions in the pathway amino-acid biosynthesis; L-homocysteine biosynthesis; L-homocysteine from S-adenosyl-L-homocysteine: step 1/1. May play a key role in the regulation of the intracellular concentration of adenosylhomocysteine. In Sphingopyxis alaskensis (strain DSM 13593 / LMG 18877 / RB2256) (Sphingomonas alaskensis), this protein is Adenosylhomocysteinase.